We begin with the raw amino-acid sequence, 262 residues long: Acyl-[acyl-carrier-protein]--UDP-N-acetylglucosamine O-acyltransferase (262 aa).

This sequence belongs to the transferase hexapeptide repeat family. LpxA subfamily. As to quaternary structure, homotrimer.

It is found in the cytoplasm. It catalyses the reaction a (3R)-hydroxyacyl-[ACP] + UDP-N-acetyl-alpha-D-glucosamine = a UDP-3-O-[(3R)-3-hydroxyacyl]-N-acetyl-alpha-D-glucosamine + holo-[ACP]. It participates in glycolipid biosynthesis; lipid IV(A) biosynthesis; lipid IV(A) from (3R)-3-hydroxytetradecanoyl-[acyl-carrier-protein] and UDP-N-acetyl-alpha-D-glucosamine: step 1/6. Its function is as follows. Involved in the biosynthesis of lipid A, a phosphorylated glycolipid that anchors the lipopolysaccharide to the outer membrane of the cell. The sequence is that of Acyl-[acyl-carrier-protein]--UDP-N-acetylglucosamine O-acyltransferase from Haemophilus influenzae (strain ATCC 51907 / DSM 11121 / KW20 / Rd).